A 915-amino-acid chain; its full sequence is Protein translocase subunit SecA (915 aa).

Residues Gln-87, 105 to 109 (GEGKT), and Asp-512 each bind ATP. Over residues 849–864 (AAQQQARQAPLPNAPA) the composition is skewed to low complexity. The interval 849–915 (AAQQQARQAP…CHGSRAKDHA (67 aa)) is disordered. Residues 876–891 (PEEKVARVAAERHIGR) show a composition bias toward basic and acidic residues. 4 residues coordinate Zn(2+): Cys-895, Cys-897, Cys-906, and His-907.

This sequence belongs to the SecA family. As to quaternary structure, monomer and homodimer. Part of the essential Sec protein translocation apparatus which comprises SecA, SecYEG and auxiliary proteins SecDF-YajC and YidC. It depends on Zn(2+) as a cofactor.

It localises to the cell inner membrane. Its subcellular location is the cytoplasm. The catalysed reaction is ATP + H2O + cellular proteinSide 1 = ADP + phosphate + cellular proteinSide 2.. In terms of biological role, part of the Sec protein translocase complex. Interacts with the SecYEG preprotein conducting channel. Has a central role in coupling the hydrolysis of ATP to the transfer of proteins into and across the cell membrane, serving both as a receptor for the preprotein-SecB complex and as an ATP-driven molecular motor driving the stepwise translocation of polypeptide chains across the membrane. The chain is Protein translocase subunit SecA from Actinobacillus succinogenes (strain ATCC 55618 / DSM 22257 / CCUG 43843 / 130Z).